The sequence spans 334 residues: MRNWLVALASLLLLAGCEKPAEQVHLSGPTMGTTYNIKYIQQPGIADSKTLQTEIDRLLEEVNDQMSTYRKDSELSRFNQHTSSEPFAVSTQTLTVVKEAIRLNGLTEGALDVTVGPLVNLWGFGPEARPDVVPTDEELNARRAITGIEHLTIEGNTLSKDIPELYVDLSTIAKGWGVDVVADYLQSQGIENYMVEIGGEIRLKGLNRDGVPWRIAIEKPSVDQRSVQEIIEPGDYAIATSGDYRNYFEQDGVRYSHIIDPTTGRPINNRVVSVTVLDKSCMTADGLATGLMVMGEERGMAVAEANQIPVLMIVKTDDGFKEYASSSFKPFLSK.

Positions 1–16 (MRNWLVALASLLLLAG) are cleaved as a signal peptide. C17 carries the N-palmitoyl cysteine lipid modification. Residue C17 is the site of S-diacylglycerol cysteine attachment. Residues M31, Y69, 110-112 (ALD), and D168 each bind FAD. T171 is a binding site for Mg(2+). FAD contacts are provided by K174 and I259. Residues D285 and T289 each coordinate Mg(2+).

It belongs to the ApbE family. The cofactor is Mg(2+).

It localises to the cell inner membrane. The catalysed reaction is L-threonyl-[protein] + FAD = FMN-L-threonyl-[protein] + AMP + H(+). In terms of biological role, flavin transferase that catalyzes the transfer of the FMN moiety of FAD and its covalent binding to the hydroxyl group of a threonine residue in a target flavoprotein such as NqrB and NqrC, two subunits of the NQR complex. Cannot use directly FMN instead of FAD as substrate. The protein is FAD:protein FMN transferase of Vibrio cholerae serotype O1 (strain ATCC 39541 / Classical Ogawa 395 / O395).